The primary structure comprises 267 residues: 3-methyl-2-oxobutanoate hydroxymethyltransferase (267 aa).

The Mg(2+) site is built by aspartate 46 and aspartate 85. Residues 46-47, aspartate 85, and lysine 115 each bind 3-methyl-2-oxobutanoate; that span reads DS. Glutamate 117 is a binding site for Mg(2+). Residue glutamate 184 is the Proton acceptor of the active site.

Belongs to the PanB family. As to quaternary structure, homodecamer; pentamer of dimers. It depends on Mg(2+) as a cofactor.

Its subcellular location is the cytoplasm. It carries out the reaction 3-methyl-2-oxobutanoate + (6R)-5,10-methylene-5,6,7,8-tetrahydrofolate + H2O = 2-dehydropantoate + (6S)-5,6,7,8-tetrahydrofolate. It participates in cofactor biosynthesis; (R)-pantothenate biosynthesis; (R)-pantoate from 3-methyl-2-oxobutanoate: step 1/2. Functionally, catalyzes the reversible reaction in which hydroxymethyl group from 5,10-methylenetetrahydrofolate is transferred onto alpha-ketoisovalerate to form ketopantoate. The chain is 3-methyl-2-oxobutanoate hydroxymethyltransferase from Citrifermentans bemidjiense (strain ATCC BAA-1014 / DSM 16622 / JCM 12645 / Bem) (Geobacter bemidjiensis).